Consider the following 335-residue polypeptide: Beta-hexosaminidase (335 aa).

Substrate is bound by residues Asp-60, Arg-68, Arg-133, and 163–164; that span reads KH. His-176 functions as the Proton donor/acceptor in the catalytic mechanism. Asp-247 serves as the catalytic Nucleophile.

The protein belongs to the glycosyl hydrolase 3 family. NagZ subfamily.

It is found in the cytoplasm. The catalysed reaction is Hydrolysis of terminal non-reducing N-acetyl-D-hexosamine residues in N-acetyl-beta-D-hexosaminides.. The protein operates within cell wall biogenesis; peptidoglycan recycling. In terms of biological role, plays a role in peptidoglycan recycling by cleaving the terminal beta-1,4-linked N-acetylglucosamine (GlcNAc) from peptide-linked peptidoglycan fragments, giving rise to free GlcNAc, anhydro-N-acetylmuramic acid and anhydro-N-acetylmuramic acid-linked peptides. In Xylella fastidiosa (strain M23), this protein is Beta-hexosaminidase.